A 200-amino-acid chain; its full sequence is Type 1 fimbriae regulatory protein FimB (200 aa).

A Tyr recombinase domain is found at 8 to 189 (KKRNFLTHSE…NAGRFYGIWD (182 aa)). Active-site residues include Arg47, Lys72, His141, Arg144, and His167. The O-(3'-phospho-DNA)-tyrosine intermediate role is filled by Tyr176.

The protein belongs to the 'phage' integrase family.

FimB is one of the 2 regulatory proteins which control the phase variation of type 1 fimbriae in E.coli. These proteins mediate the periodic inversion of a 300bp DNA segment that harbors the promoter for the fimbrial structural gene, fimA. FimB switches fimA on. The chain is Type 1 fimbriae regulatory protein FimB (fimB) from Escherichia coli O157:H7.